Reading from the N-terminus, the 154-residue chain is Putative ankyrin repeat protein RBE_1220 (154 aa).

ANK repeat units lie at residues 78–108 and 113–142; these read EKVN…NVDQ and NSRT…ILIL.

The sequence is that of Putative ankyrin repeat protein RBE_1220 from Rickettsia bellii (strain RML369-C).